Consider the following 94-residue polypeptide: Small ribosomal subunit protein bS16c (94 aa).

The protein belongs to the bacterial ribosomal protein bS16 family.

The protein resides in the plastid. Its subcellular location is the chloroplast. The polypeptide is Small ribosomal subunit protein bS16c (Phalaenopsis aphrodite subsp. formosana (Moth orchid)).